A 1026-amino-acid chain; its full sequence is Multidrug resistance protein MdtC (1026 aa).

11 consecutive transmembrane segments (helical) span residues 15-35, 333-353, 360-380, 387-407, 431-451, 463-483, 528-548, 853-873, 897-917, 953-973, and 984-1004; these read ILIA…LPVA, EVEE…FLFL, LIPA…MYLC, LSLM…IVVL, VGFT…PLLL, FAVT…TLTP, LVGV…IAIP, LILI…LYES, LFNA…IGIV, PIMM…LSGG, and ITIV…TPVV.

The protein belongs to the resistance-nodulation-cell division (RND) (TC 2.A.6) family. MdtC subfamily. In terms of assembly, part of a tripartite efflux system composed of MdtA, MdtB and MdtC. MdtC forms a heteromultimer with MdtB.

It localises to the cell inner membrane. The protein is Multidrug resistance protein MdtC of Salmonella paratyphi C (strain RKS4594).